The chain runs to 148 residues: Large ribosomal subunit protein uL15 (148 aa).

The segment covering 1–10 (MQLHNLEYKK) has biased composition (basic and acidic residues). The disordered stretch occupies residues 1–42 (MQLHNLEYKKGSRNHKEKRVGRGHGSGLGKTSGRGQDGQKAR). Residues 11-22 (GSRNHKEKRVGR) show a composition bias toward basic residues. Residues 23–36 (GHGSGLGKTSGRGQ) are compositionally biased toward gly residues.

The protein belongs to the universal ribosomal protein uL15 family. Part of the 50S ribosomal subunit.

In terms of biological role, binds to the 23S rRNA. The sequence is that of Large ribosomal subunit protein uL15 from Ureaplasma urealyticum serovar 10 (strain ATCC 33699 / Western).